Reading from the N-terminus, the 93-residue chain is Sm-like protein LSM2 (93 aa).

The 75-residue stretch at 2-76 folds into the Sm domain; it reads LFFSYFKDLV…VRYVQLPKDG (75 aa).

It belongs to the snRNP Sm proteins family. As to quaternary structure, component of the heptameric LSM1-LSM7 complex that forms a seven-membered ring structure with a donut shape. The LSM subunits are arranged in the order LSM1, LSM2, LSM3, LSM6, LSM5, LSM7 and LSM4. LSM2 subunit interacts only with its two neighboring subunits, LSM1A or LSM1B and LSM3A or LSM3B. Component of the heptameric LSM2-LSM8 complex that forms a seven-membered ring structure with a donut shape. The LSM subunits are arranged in the order LSM8, LSM2, LSM3, LSM6, LSM5, LSM7 and LSM4. LSM2 subunit interacts only with its two neighboring subunits, LSM8 and LSM3A or LSM3B. As to expression, expressed in roots, leaves, stems, flowers and siliques.

The protein localises to the cytoplasm. Its subcellular location is the nucleus. Component of LSM protein complexes, which are involved in RNA processing. Component of the cytoplasmic LSM1-LSM7 complex which is involved in mRNA degradation by promoting decapping and leading to accurate 5'-3' mRNA decay. The cytoplasmic LSM1-LSM7 complex regulates developmental gene expression by the decapping of specific development-related transcripts. Component of the nuclear LSM2-LSM8 complex which is involved splicing nuclear mRNAs. LSM2-LSM8 binds directly to the U6 small nuclear RNAs (snRNAs) and is essential for accurate splicing of selected development-related mRNAs through the stabilization of the spliceosomal U6 snRNA. Plays a critical role in the regulation of development-related gene expression. The protein is Sm-like protein LSM2 of Arabidopsis thaliana (Mouse-ear cress).